The following is a 420-amino-acid chain: Bone morphogenetic protein 2 (420 aa).

Positions 1-23 (MVAVVRSLMVLLLAQVLLEGATG) are cleaved as a signal peptide. The propeptide occupies 24–303 (LIPEVGRRRY…DSVLHTREKR (280 aa)). N-linked (GlcNAc...) asparagine glycans are attached at residues Asn-138, Asn-167, Asn-168, Asn-172, and Asn-362. 3 cysteine pairs are disulfide-bonded: Cys-320–Cys-385, Cys-349–Cys-417, and Cys-353–Cys-419.

Belongs to the TGF-beta family. As to quaternary structure, homodimer; disulfide-linked.

Its subcellular location is the secreted. Its function is as follows. Induces cartilage and bone formation. The polypeptide is Bone morphogenetic protein 2 (bmp2) (Tetraodon nigroviridis (Spotted green pufferfish)).